The sequence spans 495 residues: Cytochrome P450 2B15 (495 aa).

A Phosphoserine; by PKA modification is found at S129. C437 serves as a coordination point for heme.

It belongs to the cytochrome P450 family. Heme serves as cofactor.

Its subcellular location is the endoplasmic reticulum membrane. It localises to the microsome membrane. The enzyme catalyses an organic molecule + reduced [NADPH--hemoprotein reductase] + O2 = an alcohol + oxidized [NADPH--hemoprotein reductase] + H2O + H(+). Functionally, cytochromes P450 are a group of heme-thiolate monooxygenases. In liver microsomes, this enzyme is involved in an NADPH-dependent electron transport pathway. It oxidizes a variety of structurally unrelated compounds, including steroids, fatty acids, and xenobiotics. The polypeptide is Cytochrome P450 2B15 (Cyp2b15) (Rattus norvegicus (Rat)).